Here is a 227-residue protein sequence, read N- to C-terminus: (S)-2-haloacid dehalogenase (227 aa).

D10 functions as the Nucleophile in the catalytic mechanism. Residues 11–12, R41, and 118–119 each bind an (S)-2-haloacid; these read LY and SN. The segment at 175–180 is important for catalytic activity; the sequence is SSNAWD.

It belongs to the HAD-like hydrolase superfamily. S-2-haloalkanoic acid dehalogenase family. Homotetramer.

The enzyme catalyses an (S)-2-haloacid + H2O = a (2R)-2-hydroxycarboxylate + a halide anion + H(+). It catalyses the reaction (S)-2-chloropropanoate + H2O = (R)-lactate + chloride + H(+). Catalyzes the hydrolytic dehalogenation of small (S)-2-haloalkanoic acids to yield the corresponding (R)-2-hydroxyalkanoic acids. Acts on acids of short chain lengths, C(2) to C(4), with inversion of configuration at C-2. Active with 2-halogenated carboxylic acids and converts only the S-isomer (or L-isomer) of 2-chloropropionic acid with inversion of configuration to produce R-lactate (or D-isomer). In Pseudomonas putida (Arthrobacter siderocapsulatus), this protein is (S)-2-haloacid dehalogenase.